We begin with the raw amino-acid sequence, 336 residues long: Holliday junction branch migration complex subunit RuvB (336 aa).

The segment at 4-184 (ADRLISAGTT…FGIVQRLEFY (181 aa)) is large ATPase domain (RuvB-L). ATP is bound by residues I23, R24, G65, K68, T69, T70, 131-133 (EDY), R174, Y184, and R221. A Mg(2+)-binding site is contributed by T69. The tract at residues 185–255 (QVPDLQYIVS…IAAQALDMLN (71 aa)) is small ATPAse domain (RuvB-S). Residues 258–336 (AEGFDYMDRK…HFGITPPEMP (79 aa)) form a head domain (RuvB-H) region. Residues R294, R313, and R318 each coordinate DNA.

It belongs to the RuvB family. Homohexamer. Forms an RuvA(8)-RuvB(12)-Holliday junction (HJ) complex. HJ DNA is sandwiched between 2 RuvA tetramers; dsDNA enters through RuvA and exits via RuvB. An RuvB hexamer assembles on each DNA strand where it exits the tetramer. Each RuvB hexamer is contacted by two RuvA subunits (via domain III) on 2 adjacent RuvB subunits; this complex drives branch migration. In the full resolvosome a probable DNA-RuvA(4)-RuvB(12)-RuvC(2) complex forms which resolves the HJ.

The protein localises to the cytoplasm. It catalyses the reaction ATP + H2O = ADP + phosphate + H(+). The RuvA-RuvB-RuvC complex processes Holliday junction (HJ) DNA during genetic recombination and DNA repair, while the RuvA-RuvB complex plays an important role in the rescue of blocked DNA replication forks via replication fork reversal (RFR). RuvA specifically binds to HJ cruciform DNA, conferring on it an open structure. The RuvB hexamer acts as an ATP-dependent pump, pulling dsDNA into and through the RuvAB complex. RuvB forms 2 homohexamers on either side of HJ DNA bound by 1 or 2 RuvA tetramers; 4 subunits per hexamer contact DNA at a time. Coordinated motions by a converter formed by DNA-disengaged RuvB subunits stimulates ATP hydrolysis and nucleotide exchange. Immobilization of the converter enables RuvB to convert the ATP-contained energy into a lever motion, pulling 2 nucleotides of DNA out of the RuvA tetramer per ATP hydrolyzed, thus driving DNA branch migration. The RuvB motors rotate together with the DNA substrate, which together with the progressing nucleotide cycle form the mechanistic basis for DNA recombination by continuous HJ branch migration. Branch migration allows RuvC to scan DNA until it finds its consensus sequence, where it cleaves and resolves cruciform DNA. The chain is Holliday junction branch migration complex subunit RuvB from Escherichia coli O17:K52:H18 (strain UMN026 / ExPEC).